We begin with the raw amino-acid sequence, 1025 residues long: Myosin phosphatase Rho-interacting protein (1025 aa).

Residues 2 to 383 (SAAKENPCRK…DRRSTEPSVT (382 aa)) form an interaction with F-actin region. Positions 43–150 (KPIYGGWLLL…WLEMLMVYPR (108 aa)) constitute a PH 1 domain. Disordered stretches follow at residues 152–302 (NKQN…RRSQ) and 317–383 (HMET…PSVT). Positions 179–189 (SSSSSSSSSSS) are enriched in low complexity. 6 positions are modified to phosphoserine: S192, S217, S218, S220, S224, and S226. The span at 217 to 236 (SSLSPAQSPSQSQPPAASSL) shows a compositional bias: low complexity. The segment covering 239 to 263 (PGLESKEEESAMSSDRMDCGRKVRV) has biased composition (basic and acidic residues). A phosphoserine mark is found at S265 and S269. Over residues 271 to 281 (EKTKQDLKAEE) the composition is skewed to basic and acidic residues. The span at 284 to 294 (LPPPLSPPSPS) shows a compositional bias: pro residues. Phosphoserine occurs at positions 289 and 292. At T295 the chain carries Phosphothreonine. A Phosphoserine modification is found at S326. Residues 332-348 (RQGRSEKRAFPRKRDFT) show a composition bias toward basic and acidic residues. T348 carries the post-translational modification Phosphothreonine. 2 positions are modified to phosphoserine: S362 and S365. Residues 387–483 (LNFKKGWLTK…WIQTIMKHVH (97 aa)) form the PH 2 domain. Disordered regions lie at residues 485–545 (TTAP…TFDW) and 560–591 (VGGV…RREE). A Phosphoserine modification is found at S493. Basic and acidic residues-rich tracts occupy residues 524–545 (PEQK…TFDW) and 567–589 (DTHE…ARRR). Positions 546-824 (AEFRPIQQAL…SVQRELEVLS (279 aa)) are interaction with RHOA. S619 carries the post-translational modification Phosphoserine. The residue at position 646 (T646) is a Phosphothreonine. Residues S663 and S800 each carry the phosphoserine modification. Residues 673–977 (HELTSLLEKE…AATEALGEKS (305 aa)) are a coiled coil. Positions 824-879 (SEQYSQKCLENAHLAQALEAERQALRQCQRENQELNAHNQELNNRLAAEITRLRTL) are interaction with PPP1R12A. 5 positions are modified to phosphoserine: S891, S977, S993, S1014, and S1016.

As to quaternary structure, binds F-actin through its N-terminus. Interacts with MYZAP. Binds RHOA, PPP1R12A/MBS and PPP1R12C/MBS85 through adjacent coiled coil domains.

Its subcellular location is the cytoplasm. The protein resides in the cytoskeleton. Functionally, targets myosin phosphatase to the actin cytoskeleton. Required for the regulation of the actin cytoskeleton by RhoA and ROCK1. Depletion leads to an increased number of stress fibers in smooth muscle cells through stabilization of actin fibers by phosphorylated myosin. Overexpression of MRIP as well as its F-actin-binding region leads to disassembly of stress fibers in neuronal cells. The polypeptide is Myosin phosphatase Rho-interacting protein (MPRIP) (Homo sapiens (Human)).